A 152-amino-acid polypeptide reads, in one-letter code: Small ribosomal subunit protein uS11 (152 aa).

The protein belongs to the universal ribosomal protein uS11 family. In terms of assembly, component of the small ribosomal subunit. Part of the small subunit (SSU) processome, composed of more than 70 proteins and the RNA chaperone small nucleolar RNA (snoRNA) U3.

The protein localises to the cytoplasm. It is found in the nucleus. Its subcellular location is the nucleolus. Its function is as follows. Component of the small ribosomal subunit. The ribosome is a large ribonucleoprotein complex responsible for the synthesis of proteins in the cell. Part of the small subunit (SSU) processome, first precursor of the small eukaryotic ribosomal subunit. During the assembly of the SSU processome in the nucleolus, many ribosome biogenesis factors, an RNA chaperone and ribosomal proteins associate with the nascent pre-rRNA and work in concert to generate RNA folding, modifications, rearrangements and cleavage as well as targeted degradation of pre-ribosomal RNA by the RNA exosome. The chain is Small ribosomal subunit protein uS11 (rps-14) from Caenorhabditis elegans.